The primary structure comprises 173 residues: Probable DNA-directed RNA polymerase subunit delta (173 aa).

One can recognise an HTH HARE-type domain in the interval 14–81 (NSFIDLAYMA…GEYMWGLRDW (68 aa)). Residues 113–173 (LLGEDEVEDE…DEFDDEEEEE (61 aa)) form a disordered region. A compositionally biased stretch (acidic residues) spans 115 to 173 (GEDEVEDELDLLPSDGDEENVDTEDEEVEDELDEAGLVVEPDEEFEDEEDEFDDEEEEE).

It belongs to the RpoE family. RNAP is composed of a core of 2 alpha, a beta and a beta' subunits. The core is associated with a delta subunit and one of several sigma factors.

Its function is as follows. Participates in both the initiation and recycling phases of transcription. In the presence of the delta subunit, RNAP displays an increased specificity of transcription, a decreased affinity for nucleic acids, and an increased efficiency of RNA synthesis because of enhanced recycling. This is Probable DNA-directed RNA polymerase subunit delta from Macrococcus caseolyticus (strain JCSC5402) (Macrococcoides caseolyticum).